The sequence spans 353 residues: Heterogeneous nuclear ribonucleoprotein D0 (353 aa).

The segment at 1 to 89 (MSEEQFGGDG…SSPRHTEAAT (89 aa)) is disordered. An N-acetylserine modification is found at Ser-2. Positions 11–42 (AAAAATAAVGGSAGEQEGAMVAAAQGAAAAAG) are enriched in low complexity. Positions 43 to 56 (SGSGGGSAPGGTEG) are enriched in gly residues. Positions 62–71 (EGAKIDASKN) are enriched in basic and acidic residues. Ser-69 carries the phosphoserine modification. Lys-70 participates in a covalent cross-link: Glycyl lysine isopeptide (Lys-Gly) (interchain with G-Cter in SUMO2). Phosphoserine is present on residues Ser-78, Ser-80, and Ser-81. A Phosphothreonine modification is found at Thr-89. RRM domains lie at 95 to 177 (WKMF…KTKE) and 180 to 259 (KKIF…MSKE). N6-methyllysine is present on Lys-117. Phosphothreonine is present on Thr-125. Lys-127 participates in a covalent cross-link: Glycyl lysine isopeptide (Lys-Gly) (interchain with G-Cter in SUMO2). Lys-163 is subject to N6-acetyllysine. Phosphoserine is present on Ser-188. Thr-191 is subject to Phosphothreonine. Lys-195 participates in a covalent cross-link: Glycyl lysine isopeptide (Lys-Gly) (interchain with G-Cter in SUMO2). Lys-241 and Lys-249 each carry N6-acetyllysine. Residue Ser-269 is modified to Phosphoserine. 4 positions are modified to omega-N-methylarginine: Arg-270, Arg-276, Arg-278, and Arg-280. At Arg-343 the chain carries Asymmetric dimethylarginine; alternate. A Dimethylated arginine; alternate modification is found at Arg-343. At Arg-343 the chain carries Omega-N-methylarginine; alternate.

In terms of assembly, identified in a IGF2BP1-dependent mRNP granule complex containing untranslated mRNAs. Part of a complex associated with the FOS mCRD domain and consisting of PABPC1, PAIP1, CSDE1/UNR and SYNCRIP. Interacts with IGF2BP2. Interacts with GTPBP1. Interacts with EIF4G1; the interaction requires RNA. Interacts with EIF3B and RPS3. Methylated by PRMT1, in an insulin-dependent manner. The PRMT1-mediated methylation regulates its phosphorylation. In terms of processing, arg-343 is dimethylated, probably to asymmetric dimethylarginine.

The protein resides in the nucleus. It is found in the cytoplasm. In terms of biological role, binds with high affinity to RNA molecules that contain AU-rich elements (AREs) found within the 3'-UTR of many proto-oncogenes and cytokine mRNAs. Also binds to double- and single-stranded DNA sequences in a specific manner and functions a transcription factor. Each of the RNA-binding domains specifically can bind solely to a single-stranded non-monotonous 5'-UUAG-3' sequence and also weaker to the single-stranded 5'-TTAGGG-3' telomeric DNA repeat. Binds RNA oligonucleotides with 5'-UUAGGG-3' repeats more tightly than the telomeric single-stranded DNA 5'-TTAGGG-3' repeats. Binding of RRM1 to DNA inhibits the formation of DNA quadruplex structure which may play a role in telomere elongation. May be involved in translationally coupled mRNA turnover. Implicated with other RNA-binding proteins in the cytoplasmic deadenylation/translational and decay interplay of the FOS mRNA mediated by the major coding-region determinant of instability (mCRD) domain. May play a role in the regulation of the rhythmic expression of circadian clock core genes. Directly binds to the 3'UTR of CRY1 mRNA and induces CRY1 rhythmic translation. May also be involved in the regulation of PER2 translation. In Rattus norvegicus (Rat), this protein is Heterogeneous nuclear ribonucleoprotein D0 (Hnrnpd).